The chain runs to 452 residues: Solute carrier family 52, riboflavin transporter, member 3-B (452 aa).

Transmembrane regions (helical) follow at residues 11 to 31 (LFGI…PLIV), 38 to 58 (WLLP…PLFI), 73 to 93 (PVIY…AFLW), 111 to 131 (LSFL…PFMM), and 138 to 158 (LTTY…VALV). Asn168, Asn174, Asn179, and Asn193 each carry an N-linked (GlcNAc...) asparagine glycan. 6 helical membrane-spanning segments follow: residues 199–219 (FFLF…LLNL), 285–305 (VFIF…LPSV), 321–341 (AATL…FVPI), 344–364 (LVLM…IMAM), 381–401 (ALIV…KVII), and 412–432 (ALVW…LSMF).

Belongs to the riboflavin transporter family.

It is found in the cell membrane. The catalysed reaction is riboflavin(in) = riboflavin(out). Functionally, plasma membrane transporter mediating the uptake by cells of the water soluble vitamin B2/riboflavin that plays a key role in biochemical oxidation-reduction reactions of the carbohydrate, lipid, and amino acid metabolism. In Danio rerio (Zebrafish), this protein is Solute carrier family 52, riboflavin transporter, member 3-B (slc52a3b).